Reading from the N-terminus, the 379-residue chain is Probable RNA methyltransferase RB6963 (379 aa).

The Proton acceptor role is filled by Glu-89. A Radical SAM core domain is found at 96–332; it reads ATGRTTLCVS…VRYSLGNDIE (237 aa). A disulfide bridge connects residues Cys-103 and Cys-335. [4Fe-4S] cluster contacts are provided by Cys-110, Cys-114, and Cys-117. S-adenosyl-L-methionine is bound by residues 160–161, Ser-192, 215–217, and Asn-291; these read GE and SLH. The active-site S-methylcysteine intermediate is Cys-335.

This sequence belongs to the radical SAM superfamily. RlmN family. [4Fe-4S] cluster serves as cofactor.

Its subcellular location is the cytoplasm. This is Probable RNA methyltransferase RB6963 from Rhodopirellula baltica (strain DSM 10527 / NCIMB 13988 / SH1).